The primary structure comprises 544 residues: CTP synthase (544 aa).

Positions 1 to 266 (MSTKFIFVTG…DYFVCRRFHL (266 aa)) are amidoligase domain. Residue Ser-14 participates in CTP binding. Ser-14 serves as a coordination point for UTP. ATP-binding positions include 15 to 20 (SLGKGI) and Asp-72. Residues Asp-72 and Glu-140 each coordinate Mg(2+). Residues 147–149 (DIE), 187–192 (KTKPTQ), and Lys-223 contribute to the CTP site. Residues 187–192 (KTKPTQ) and Lys-223 contribute to the UTP site. In terms of domain architecture, Glutamine amidotransferase type-1 spans 291-542 (TIGMVGKYIE…VAAAHIHQKA (252 aa)). Gly-352 lines the L-glutamine pocket. The active-site Nucleophile; for glutamine hydrolysis is the Cys-379. L-glutamine contacts are provided by residues 380-383 (LGMQ), Glu-403, and Arg-470. Catalysis depends on residues His-515 and Glu-517.

Belongs to the CTP synthase family. Homotetramer.

The catalysed reaction is UTP + L-glutamine + ATP + H2O = CTP + L-glutamate + ADP + phosphate + 2 H(+). It carries out the reaction L-glutamine + H2O = L-glutamate + NH4(+). It catalyses the reaction UTP + NH4(+) + ATP = CTP + ADP + phosphate + 2 H(+). Its pathway is pyrimidine metabolism; CTP biosynthesis via de novo pathway; CTP from UDP: step 2/2. Its activity is regulated as follows. Allosterically activated by GTP, when glutamine is the substrate; GTP has no effect on the reaction when ammonia is the substrate. The allosteric effector GTP functions by stabilizing the protein conformation that binds the tetrahedral intermediate(s) formed during glutamine hydrolysis. Inhibited by the product CTP, via allosteric rather than competitive inhibition. In terms of biological role, catalyzes the ATP-dependent amination of UTP to CTP with either L-glutamine or ammonia as the source of nitrogen. Regulates intracellular CTP levels through interactions with the four ribonucleotide triphosphates. This is CTP synthase from Pseudoalteromonas translucida (strain TAC 125).